Here is a 461-residue protein sequence, read N- to C-terminus: Ribitol-5-phosphate transferase FKTN (461 aa).

Residues 1 to 7 lie on the Cytoplasmic side of the membrane; it reads MSRINKN. Residues 6-27 form a required and sufficient for interaction with POMGNT1 region; sequence KNVVLALLTLTSSAFLLFQLYY. A helical; Signal-anchor for type II membrane protein transmembrane segment spans residues 8-28; the sequence is VVLALLTLTSSAFLLFQLYYY. Residues 29–461 are Lumenal-facing; it reads KHYLSTKNGA…SEWDEVIQLY (433 aa). A glycan (N-linked (GlcNAc...) asparagine) is linked at asparagine 92.

It belongs to the LicD transferase family. In terms of assembly, forms a complex composed of FKTN/fukutin, FKRP and RXYLT1/TMEM5. Interacts (via transmembrane domain) with POMGNT1; the interaction is direct and is required for normal POMGNT1 location in Golgi membranes. In terms of tissue distribution, expressed in the retina (at protein level). Widely expressed with highest expression in brain, heart, pancreas and skeletal muscle. Expressed at similar levels in control fetal and adult brain. Expressed in migrating neurons, including Cajar-Retzius cells and adult cortical neurons, as well as hippocampal pyramidal cells and cerebellar Purkinje cells. No expression observed in the glia limitans, the subpial astrocytes (which contribute to basement membrane formation) or other glial cells.

The protein localises to the golgi apparatus membrane. The protein resides in the cytoplasm. It is found in the nucleus. It catalyses the reaction 3-O-[beta-D-GalNAc-(1-&gt;3)-beta-D-GlcNAc-(1-&gt;4)-(O-6-P-alpha-D-Man)]-Thr-[protein] + CDP-L-ribitol = 3-O-[Rib-ol-P-3-beta-D-GalNAc-(1-&gt;3)-beta-D-GlcNAc-(1-&gt;4)-(O-6-P-alpha-D-Man)]-Thr-[protein] + CMP + H(+). The protein operates within protein modification; protein glycosylation. In terms of biological role, catalyzes the transfer of a ribitol-phosphate from CDP-ribitol to the distal N-acetylgalactosamine of the phosphorylated O-mannosyl trisaccharide (N-acetylgalactosamine-beta-3-N-acetylglucosamine-beta-4-(phosphate-6-)mannose), a carbohydrate structure present in alpha-dystroglycan (DAG1). This constitutes the first step in the formation of the ribitol 5-phosphate tandem repeat which links the phosphorylated O-mannosyl trisaccharide to the ligand binding moiety composed of repeats of 3-xylosyl-alpha-1,3-glucuronic acid-beta-1. Required for normal location of POMGNT1 in Golgi membranes, and for normal POMGNT1 activity. May interact with and reinforce a large complex encompassing the outside and inside of muscle membranes. Could be involved in brain development. This is Ribitol-5-phosphate transferase FKTN from Homo sapiens (Human).